A 190-amino-acid chain; its full sequence is Large ribosomal subunit protein bL9 (190 aa).

The protein belongs to the bacterial ribosomal protein bL9 family.

Binds to the 23S rRNA. The polypeptide is Large ribosomal subunit protein bL9 (Methylorubrum populi (strain ATCC BAA-705 / NCIMB 13946 / BJ001) (Methylobacterium populi)).